A 466-amino-acid polypeptide reads, in one-letter code: ATP synthase subunit beta, sodium ion specific (466 aa).

153–160 contributes to the ATP binding site; that stretch reads GGAGVGKT.

It belongs to the ATPase alpha/beta chains family. F-type ATPases have 2 components, CF(1) - the catalytic core - and CF(0) - the membrane proton channel. CF(1) has five subunits: alpha(3), beta(3), gamma(1), delta(1), epsilon(1). CF(0) has three main subunits: a, b and c.

It is found in the cell membrane. It carries out the reaction 4 Na(+)(in) + ATP + H2O = 4 Na(+)(out) + ADP + phosphate + H(+). Its activity is regulated as follows. Inhibited by nitrate. In terms of biological role, produces ATP from ADP in the presence of a sodium ion gradient across the membrane. The beta chain is the catalytic subunit. The sequence is that of ATP synthase subunit beta, sodium ion specific from Acetobacterium woodii (strain ATCC 29683 / DSM 1030 / JCM 2381 / KCTC 1655 / WB1).